We begin with the raw amino-acid sequence, 153 residues long: Insulin-like growth factor 1 (153 aa).

Residues 49-77 (GPETLCGAELVDALQFVCGDRGFYFSKPT) form a b region. Cystine bridges form between C54–C96, C66–C109, and C95–C100. The segment at 78-89 (GYGSSSRRLHHK) is c. The a stretch occupies residues 90–110 (GIVDECCFQSCDLRRLEMYCA). Residues 111–118 (PIKPPKSA) form a d region. Residues 119 to 153 (RSVRAQRHTDMPKAQKEVHLKNTSRGNTGNRNYRM) constitute a propeptide, e peptide. Positions 119-153 (RSVRAQRHTDMPKAQKEVHLKNTSRGNTGNRNYRM) are disordered. Residues 125–138 (RHTDMPKAQKEVHL) show a composition bias toward basic and acidic residues. Polar residues predominate over residues 139-153 (KNTSRGNTGNRNYRM).

The protein belongs to the insulin family. In terms of assembly, forms a ternary complex with IGFR1 and ITGAV:ITGB3. Forms a ternary complex with IGFR1 and ITGA6:ITGB4. Forms a ternary complex with IGFBP3 and ALS.

The protein resides in the secreted. In terms of biological role, the insulin-like growth factors, isolated from plasma, are structurally and functionally related to insulin but have a much higher growth-promoting activity. Acts as a ligand for IGF1R. Binds to the alpha subunit of IGF1R, leading to the activation of the intrinsic tyrosine kinase activity which autophosphorylates tyrosine residues in the beta subunit thus initiatiating a cascade of down-stream signaling events leading to activation of the PI3K-AKT/PKB and the Ras-MAPK pathways. Binds to integrins. Its binding to integrins and subsequent ternary complex formation with integrins and IGFR1 are essential for IGF1 signaling. The protein is Insulin-like growth factor 1 of Gallus gallus (Chicken).